Here is a 263-residue protein sequence, read N- to C-terminus: Tryptophan 2,3-dioxygenase (263 aa).

Substrate-binding positions include 32 to 36, tyrosine 94, and arginine 98; that span reads FIIVH. Histidine 221 is a binding site for heme. Threonine 235 is a binding site for substrate.

Belongs to the tryptophan 2,3-dioxygenase family. As to quaternary structure, homotetramer. Heme serves as cofactor.

It catalyses the reaction L-tryptophan + O2 = N-formyl-L-kynurenine. It functions in the pathway amino-acid degradation; L-tryptophan degradation via kynurenine pathway; L-kynurenine from L-tryptophan: step 1/2. Its function is as follows. Heme-dependent dioxygenase that catalyzes the oxidative cleavage of the L-tryptophan (L-Trp) pyrrole ring and converts L-tryptophan to N-formyl-L-kynurenine. Catalyzes the oxidative cleavage of the indole moiety. This Erythrobacter litoralis (strain HTCC2594) protein is Tryptophan 2,3-dioxygenase.